The chain runs to 577 residues: Multidrug transporter TPO1_2 (577 aa).

Residues 1-63 form a disordered region; sequence MSSTSSDRPY…ALSKNSTQTS (63 aa). N-linked (GlcNAc...) asparagine glycans are attached at residues asparagine 44 and asparagine 58. A run of 12 helical transmembrane segments spans residues 137-157, 167-187, 204-224, 234-254, 263-283, 293-313, 368-388, 406-426, 446-466, 475-495, 504-526, and 541-561; these read VMLC…SSIF, IYHV…LGFA, GVLV…ATAK, FFAG…FADM, AICL…VIGS, WLEY…LFFF, PLLL…YLLL, ELPY…IWWM, LLPM…FCWT, WIVP…IFLP, YLLI…GAAF, and YAGL…LLFL.

The protein belongs to the major facilitator superfamily. DHA1 family. Polyamines/proton antiporter (TC 2.A.1.2.16) subfamily.

The protein resides in the cell membrane. Functionally, multidrug resistance transporter involved in resistance to azole antifungal drugs such as the imidazoles miconazole, ketoconazole, and tioconazole; as well as the triazoles itraconazole and fluconazole. Also plays a role in the resistance to other antifungal drug families such as the polyene amphotericin B, the pyrimide analog flucytosine, the fungicide mancozeb, and the polyamine spermine. Decreases the intracellular accumulation of clotrimazole by mediating its extrusion from cells. Plays a role in biofilm formation. The chain is Multidrug transporter TPO1_2 from Candida glabrata (strain ATCC 2001 / BCRC 20586 / JCM 3761 / NBRC 0622 / NRRL Y-65 / CBS 138) (Yeast).